Reading from the N-terminus, the 156-residue chain is Methylated-DNA--protein-cysteine methyltransferase (156 aa).

Residue Cys120 is the Nucleophile; methyl group acceptor of the active site.

It belongs to the MGMT family.

It localises to the cytoplasm. It carries out the reaction a 6-O-methyl-2'-deoxyguanosine in DNA + L-cysteinyl-[protein] = S-methyl-L-cysteinyl-[protein] + a 2'-deoxyguanosine in DNA. The enzyme catalyses a 4-O-methyl-thymidine in DNA + L-cysteinyl-[protein] = a thymidine in DNA + S-methyl-L-cysteinyl-[protein]. In terms of biological role, involved in the cellular defense against the biological effects of O6-methylguanine (O6-MeG) and O4-methylthymine (O4-MeT) in DNA. Repairs the methylated nucleobase in DNA by stoichiometrically transferring the methyl group to a cysteine residue in the enzyme. This is a suicide reaction: the enzyme is irreversibly inactivated. The protein is Methylated-DNA--protein-cysteine methyltransferase of Sulfurisphaera tokodaii (strain DSM 16993 / JCM 10545 / NBRC 100140 / 7) (Sulfolobus tokodaii).